The chain runs to 1052 residues: RIMS-binding protein 2 (1052 aa).

The interval 115–164 is disordered; the sequence is GEYIRPLPQPGDRPEPLSAKPTFLSRSGSARCRSESDMENERNSNTSKQR. Residues 146-156 show a composition bias toward basic and acidic residues; the sequence is CRSESDMENER. The SH3 1 domain occupies 167–234; it reads GKVHLCVARY…PSNFVDFVQD (68 aa). Fibronectin type-III domains are found at residues 297-390, 393-475, and 489-590; these read VPYP…GKDV, APSH…KKEA, and PPQD…VPPT. Disordered regions lie at residues 584-615, 629-666, 697-716, 767-787, and 805-829; these read ELLV…DEHL, RAPG…PVST, SAGQ…PDFK, EMQL…NALK, and FPRG…YGRD. The span at 585-598 shows a compositional bias: pro residues; sequence LLVPPTPHPRPAPQ. The span at 645-654 shows a compositional bias: low complexity; sequence PGRRSPSPSR. S704 and S712 each carry phosphoserine. 2 positions are modified to phosphoserine: S832 and S839. T841 is modified (phosphothreonine). SH3 domains are found at residues 848–916 and 952–1019; these read LPAR…EIQA and VSTR…EVPD. The segment at 1029-1052 is disordered; that stretch reads PSHYSQDTPMRSKAKRKKSVHFTP. Basic residues predominate over residues 1040–1052; it reads SKAKRKKSVHFTP.

Belongs to the RIMBP family. As to quaternary structure, interacts with RIMS1, RIMS2, CACNA1D and CACNA1B, and potentially with other Ca(2+) channel alpha-1 isoforms.

It localises to the cell membrane. The protein localises to the synapse. Functionally, plays a role in the synaptic transmission as bifunctional linker that interacts simultaneously with RIMS1, RIMS2, CACNA1D and CACNA1B. This Homo sapiens (Human) protein is RIMS-binding protein 2 (RIMBP2).